A 389-amino-acid chain; its full sequence is Chalcone synthase E (389 aa).

The active site involves C164.

This sequence belongs to the thiolase-like superfamily. Chalcone/stilbene synthases family.

The catalysed reaction is (E)-4-coumaroyl-CoA + 3 malonyl-CoA + 3 H(+) = 2',4,4',6'-tetrahydroxychalcone + 3 CO2 + 4 CoA. The protein operates within secondary metabolite biosynthesis; flavonoid biosynthesis. In terms of biological role, the primary product of this enzyme is 4,2',4',6'-tetrahydroxychalcone (also termed naringenin-chalcone or chalcone) which can under specific conditions spontaneously isomerize into naringenin. The chain is Chalcone synthase E (CHSE) from Ipomoea purpurea (Common morning glory).